Here is a 113-residue protein sequence, read N- to C-terminus: Endoribonuclease SymE (113 aa).

The 46-residue stretch at 29-74 (SRYPDYSRIPAITLKGQWLEAAGFATGTAVDVKVMEGCIVLTAQPA) folds into the SpoVT-AbrB domain.

This sequence belongs to the SymE family.

The protein localises to the cytoplasm. In terms of biological role, involved in the degradation and recycling of damaged RNA. It is itself a target for degradation by the ATP-dependent protease Lon. The sequence is that of Endoribonuclease SymE from Shigella flexneri serotype 5b (strain 8401).